The sequence spans 40 residues: Photosystem II reaction center protein J (40 aa).

A helical transmembrane segment spans residues 8 to 28 (IPLWLIGTVTGIIVIGLLGIF).

Belongs to the PsbJ family. As to quaternary structure, PSII is composed of 1 copy each of membrane proteins PsbA, PsbB, PsbC, PsbD, PsbE, PsbF, PsbH, PsbI, PsbJ, PsbK, PsbL, PsbM, PsbT, PsbX, PsbY, PsbZ, Psb30/Ycf12, at least 3 peripheral proteins of the oxygen-evolving complex and a large number of cofactors. It forms dimeric complexes.

Its subcellular location is the plastid. The protein localises to the chloroplast thylakoid membrane. Functionally, one of the components of the core complex of photosystem II (PSII). PSII is a light-driven water:plastoquinone oxidoreductase that uses light energy to abstract electrons from H(2)O, generating O(2) and a proton gradient subsequently used for ATP formation. It consists of a core antenna complex that captures photons, and an electron transfer chain that converts photonic excitation into a charge separation. This Pinus koraiensis (Korean pine) protein is Photosystem II reaction center protein J.